Here is a 419-residue protein sequence, read N- to C-terminus: Putative zinc metalloprotease spr0242 (419 aa).

H18 is a Zn(2+) binding site. Residue E19 is part of the active site. Residue H22 participates in Zn(2+) binding. The next 3 membrane-spanning stretches (helical) occupy residues 169–191 (LITN…WVLI), 345–367 (ILYF…IPAL), and 388–410 (EIET…AVTW).

This sequence belongs to the peptidase M50B family. Zn(2+) serves as cofactor.

It is found in the cell membrane. In Streptococcus pneumoniae (strain ATCC BAA-255 / R6), this protein is Putative zinc metalloprotease spr0242.